The chain runs to 31 residues: uncharacterized protein (31 aa).

A helical membrane pass occupies residues 7–29 (TVVLINFFAAVGLFTLISMRFGW).

Its subcellular location is the cell inner membrane. This is an uncharacterized protein from Escherichia coli (strain K12).